A 1355-amino-acid polypeptide reads, in one-letter code: MSKLKEISRQSTTSWSPIAQYPDYMAVGTVTGTIGADFDTSSKLEIYSLDITNESKQMTLKGSTSSSTRFNKVVWGQASSNFQNGIIAGAMDNGTINLWDPTKILASDATDGGGSDDQSSLIGVGQRHSGPVQSIDFNVQNPNLLASGGSDSEVFIWDLSDPTQPSALNPGSKSQQSSDITCVAWNKKVAHILGSASYNGYIVIWDLKSKKTLMTINDRNRKCKYRSIVWHPSEATQIVAASEDDDHPVIQAWDLRNTTSPVKSMEGHKKGVWGLSWCPSDNALLLSTGKDNKTFCWNFDRQEILCEINDNNSRNNINNNSNNSNSDNNNGNTDPNAWNFEVQWSPRVPALLSTSSYVGKVNVYSLQDVNEKSTSGSSAGQLNALGIQEQTSQITPTIKHTPNWLLRPCGAAFGFGGKIAVFGRNKKVTAAANGATSPSSSSSPASSVQQSQLQQQQRVIHISHVTTEVDIVKSSEQLENVIHTGQYEQYCQEKIDQSTSDEEKSIWGFLKVKFAKDDRLKILDYLGYDIETIKKELKQFLGTLPELPIESGFNELPIENVDDQSKPEPTTTTTNETVHLEPVVDENNNVVDADSFFDTAASDANKEQQDDSSSSPSTKSPTTTTTPIEFPGDEKEQMITKALLVGDHNSAVECCLRLGRYSDALILAHAAGQELWKKTQEAYFEIVRSPFGRVVSCIVKRDFQLLVKSADLKDWKASLAILCTYAPPTDFKILSGILGDRLDKEASDLKSAILCYICAGDIDKTVDIWSRVSQQHQQQQRQSLTSSGNSITVLEQESNKDLQNLIEKVSIFRSACNGNSNNNTLNQVLSMKYAKYAEILASQGNLSASLRYLAPITNSQCKQEYGVLFDRVYRATSNHQGIPQPPFPFQLVDVYSSNQPIQQQQQQQQNKAQQVGHQHQHQHQHQNQHQHQHQHQHQHQPPQQQQQQQQQQQMGRQNTFNQPPQPMGQHQHQQQQQQQQPPIMMNQSPMQNNNNNRIPMMNQPPMMNQPPMMNQPPMMNQPPQMMNQPPQMMNQPPPQMMNQPPPQMMNNNQPPIMMRPMQPSGPSPMNPPPTMNNTQPPPMMNTMGGPSSVNNSQPPIIPMNGNPLPMNPMSPMMSDKSNQPPMNPMMNPMNPMNPMMNPIQPTAPPPMNPMIPQGGSPMINHPPPPMNPMINNGPVSTPPMNPMMNQVVPQNISPPQMPTRSPVLENKSSSPSSESFTSPAPKPNVHNKTPSIITGQLGVTTPSEGPSNEDTERFVEKLQRSIQELNGRTDSKVWEDANKRCQGLINKVSKKDISAEAFKALDAILASIVEKDFKKASDTYIQITSTPLWGEVGSQSMVGLKRLIDLGLKSH.

WD repeat units follow at residues 5–48, 65–109, 127–167, 175–215, 220–263, 267–307, and 334–374; these read KEIS…EIYS, SSST…ASDA, RHSG…QPSA, QQSS…TLMT, NRKC…SPVK, GHKK…ILCE, and DPNA…EKST. The tract at residues 108-127 is disordered; sequence DATDGGGSDDQSSLIGVGQR. The segment at 311–338 is disordered; that stretch reads NNSRNNINNNSNNSNSDNNNGNTDPNAW. Residues 412-463 form a WD 8; interaction with sec13 repeat; sequence AFGFGGKIAVFGRNKKVTAAANGATSPSSSSSPASSVQQSQLQQQQRVIHIS. 4 disordered regions span residues 558-585, 602-632, 898-1035, and 1190-1255; these read IENV…PVVD, SDAN…EFPG, NQPI…MMNQ, and QVVP…NEDT. Low complexity-rich tracts occupy residues 567–577, 612–627, and 899–917; these read PEPTTTTTNET, SSSS…TTTP, and QPIQ…QVGH. Basic residues predominate over residues 918–938; that stretch reads QHQHQHQHQNQHQHQHQHQHQ. Low complexity-rich tracts occupy residues 939 to 953, 967 to 1034, and 1205 to 1223; these read HQPP…QQQQ, MGQH…QMMN, and SPVL…FTSP. Residues 1230 to 1252 show a composition bias toward polar residues; the sequence is HNKTPSIITGQLGVTTPSEGPSN.

It belongs to the WD repeat SEC31 family. In terms of assembly, the COPII coat is composed of at least 5 proteins: the sec23/24 complex, the sec13/31 complex, and the protein sar1A or sar1B. sec13 and sec31 make a 2:2 tetramer that forms the edge element of the COPII outer coat. The tetramer self-assembles in multiple copies to form the complete polyhedral cage. Interacts (via WD 8) with sec13.

The protein localises to the cytoplasmic vesicle. The protein resides in the COPII-coated vesicle membrane. It localises to the endoplasmic reticulum membrane. Functionally, component of the coat protein complex II (COPII) which promotes the formation of transport vesicles from the endoplasmic reticulum (ER). The coat has two main functions, the physical deformation of the endoplasmic reticulum membrane into vesicles and the selection of cargo molecules. The protein is Protein transport protein SEC31 (sec31) of Dictyostelium discoideum (Social amoeba).